The primary structure comprises 280 residues: MESFLAPAKINICLHVLGRREDGYHELAMLMQRVSLYDRISLSFIEGNDIRVQCDGLTLPLGQKNIAARAAQALFDRAGIRRGLDIVIEKNIPVAAGLGGGSSDAATVLMGLNDMLGLGLSATQLMQEGVKLGADVPFFIYKHPAWATGIGDKLQEVEGLPPVWYVLVNPGLEVSTAWVYQNLRLTSARDNLRIPRFSGTVDEVVELLHNDLETVTVERFPLIGEIKQQLLGLGARGALMSGSGSTVFGVFSDGDTARAAAENLSSRSGWRAFAVEPVND.

The active site involves lysine 9. 93-103 is a binding site for ATP; the sequence is PVAAGLGGGSS. The active site involves aspartate 135.

Belongs to the GHMP kinase family. IspE subfamily.

The enzyme catalyses 4-CDP-2-C-methyl-D-erythritol + ATP = 4-CDP-2-C-methyl-D-erythritol 2-phosphate + ADP + H(+). It functions in the pathway isoprenoid biosynthesis; isopentenyl diphosphate biosynthesis via DXP pathway; isopentenyl diphosphate from 1-deoxy-D-xylulose 5-phosphate: step 3/6. In terms of biological role, catalyzes the phosphorylation of the position 2 hydroxy group of 4-diphosphocytidyl-2C-methyl-D-erythritol. This Syntrophotalea carbinolica (strain DSM 2380 / NBRC 103641 / GraBd1) (Pelobacter carbinolicus) protein is 4-diphosphocytidyl-2-C-methyl-D-erythritol kinase.